Consider the following 384-residue polypeptide: Monomethylxanthine methyltransferase 2 (384 aa).

Tyr-18, Cys-61, Asn-66, Asp-100, Leu-101, Ser-139, Phe-140, and Cys-156 together coordinate S-adenosyl-L-homocysteine. Residues Tyr-157, His-160, and Trp-161 each coordinate theobromine. Residues Asn-178, Phe-262, and Asn-263 each contribute to the Mg(2+) site. Tyr-368 lines the theobromine pocket.

It belongs to the methyltransferase superfamily. Type-7 methyltransferase family. Requires Mg(2+) as cofactor. In terms of tissue distribution, expressed, at low levels, in young leaves, floral buds and immature fruits (grains), but not in old leaves and mature fruits. Highly expressed in developing endosperm and flower buds. Detected in young leaves.

The catalysed reaction is 7-methylxanthine + S-adenosyl-L-methionine = theobromine + S-adenosyl-L-homocysteine + H(+). Its pathway is alkaloid biosynthesis. Functionally, involved in the biosynthesis of caffeine. Catalyzes the conversion of 7-methylxanthine (7mX) to theobromine and with a lower activity of paraxanthine to caffeine. Does not have 1-N-methylation activity. In Coffea arabica (Arabian coffee), this protein is Monomethylxanthine methyltransferase 2.